A 220-amino-acid chain; its full sequence is Deoxyribose-phosphate aldolase (220 aa).

D89 (proton donor/acceptor) is an active-site residue. K151 functions as the Schiff-base intermediate with acetaldehyde in the catalytic mechanism. Catalysis depends on K180, which acts as the Proton donor/acceptor.

The protein belongs to the DeoC/FbaB aldolase family. DeoC type 1 subfamily.

The protein localises to the cytoplasm. The catalysed reaction is 2-deoxy-D-ribose 5-phosphate = D-glyceraldehyde 3-phosphate + acetaldehyde. The protein operates within carbohydrate degradation; 2-deoxy-D-ribose 1-phosphate degradation; D-glyceraldehyde 3-phosphate and acetaldehyde from 2-deoxy-alpha-D-ribose 1-phosphate: step 2/2. Its function is as follows. Catalyzes a reversible aldol reaction between acetaldehyde and D-glyceraldehyde 3-phosphate to generate 2-deoxy-D-ribose 5-phosphate. This Macrococcus caseolyticus (strain JCSC5402) (Macrococcoides caseolyticum) protein is Deoxyribose-phosphate aldolase.